The primary structure comprises 275 residues: tRNA pseudouridine synthase A (275 aa).

The active-site Nucleophile is aspartate 56. Tyrosine 114 lines the substrate pocket.

It belongs to the tRNA pseudouridine synthase TruA family. In terms of assembly, homodimer.

The catalysed reaction is uridine(38/39/40) in tRNA = pseudouridine(38/39/40) in tRNA. Functionally, formation of pseudouridine at positions 38, 39 and 40 in the anticodon stem and loop of transfer RNAs. The chain is tRNA pseudouridine synthase A from Polynucleobacter asymbioticus (strain DSM 18221 / CIP 109841 / QLW-P1DMWA-1) (Polynucleobacter necessarius subsp. asymbioticus).